Here is a 159-residue protein sequence, read N- to C-terminus: Urease subunit beta 2 (159 aa).

The segment at 1 to 24 (MAKEPTKAAHPQPEQTKTNHKAHR) is disordered.

It belongs to the urease beta subunit family. As to quaternary structure, heterotrimer of UreA (gamma), UreB (beta) and UreC (alpha) subunits. Three heterotrimers associate to form the active enzyme.

The protein localises to the cytoplasm. It carries out the reaction urea + 2 H2O + H(+) = hydrogencarbonate + 2 NH4(+). Its pathway is nitrogen metabolism; urea degradation; CO(2) and NH(3) from urea (urease route): step 1/1. Its function is as follows. Disrupting the ure2 operon has no effect on urease activity, or pathogen survival in BALB/c mice when inoculated by gavage, but confers slightly enhanced resistance to low pH killing in vitro. This is Urease subunit beta 2 from Brucella suis biovar 1 (strain 1330).